The sequence spans 515 residues: Fc receptor-like protein 4 (515 aa).

Positions Met1–Ala19 are cleaved as a signal peptide. The Extracellular segment spans residues Ala20 to Leu387. 4 consecutive Ig-like C2-type domains span residues Pro23–Arg97, Ser102–Ile183, Pro193–His271, and Pro275–Asn374. 4 disulfides stabilise this stretch: Cys44/Cys85, Cys123/Cys167, Cys212/Cys261, and Cys310/Cys359. N-linked (GlcNAc...) asparagine glycosylation occurs at Asn374. The chain crosses the membrane as a helical span at residues Val388–Phe408. Residues His409–Ser515 lie on the Cytoplasmic side of the membrane. 3 short sequence motifs (ITIM motif) span residues Ser449–Val454, Leu461–Ile466, and Val491–Val496. Positions Ser494–Ser515 are disordered.

In terms of assembly, interacts with PTPN6 and PTPN11. Post-translationally, phosphorylated on cytoplasmic tyrosines upon activation. Specifically expressed by memory and monocytoid B-cells which populate spleen and lymph nodes. Preferentially expressed in memory B-cells associated with mucosal tissue (at protein level).

It is found in the cell membrane. Functionally, may function as an inhibitor of the B-cell receptor signaling. May function in the B-cell-mediated immune response. This Homo sapiens (Human) protein is Fc receptor-like protein 4 (FCRL4).